A 330-amino-acid polypeptide reads, in one-letter code: MNENLNGILNVYKEAGWTSFDVVAKLRGILKTKKIGHGGTLDPSVTGVLPIAVGKSTRLLEYMEAAGKIYEGQVTIGFSTETEDADGAIVNQTPVKNNLTESEIDSAMSHFVGKIKQIPPMYSAVKINGKKLYEYARAGQTIERPAREITIKSFVRTSPIDWNKEEGLVTFSFKVECSKGTYVRTLAVDLADSLGYAGHMSKLQRTASNGLLIKDAIKLSKIEEIKESGKLSTILYPAEYAVSDLPRVNLTTVQFDMARVGKKFAQSDWTNEVETADSSVNKTKQQEYLLTDLSLLTTEKFAAFYNDKLVAVYMKHPEKEGIWKPNKVLV.

Asp42 acts as the Nucleophile in catalysis.

This sequence belongs to the pseudouridine synthase TruB family. Type 1 subfamily.

It carries out the reaction uridine(55) in tRNA = pseudouridine(55) in tRNA. Its function is as follows. Responsible for synthesis of pseudouridine from uracil-55 in the psi GC loop of transfer RNAs. This is tRNA pseudouridine synthase B from Lactococcus lactis subsp. cremoris (strain MG1363).